The primary structure comprises 338 residues: S-adenosylmethionine:tRNA ribosyltransferase-isomerase (338 aa).

The protein belongs to the QueA family. Monomer.

The protein localises to the cytoplasm. The enzyme catalyses 7-aminomethyl-7-carbaguanosine(34) in tRNA + S-adenosyl-L-methionine = epoxyqueuosine(34) in tRNA + adenine + L-methionine + 2 H(+). The protein operates within tRNA modification; tRNA-queuosine biosynthesis. Its function is as follows. Transfers and isomerizes the ribose moiety from AdoMet to the 7-aminomethyl group of 7-deazaguanine (preQ1-tRNA) to give epoxyqueuosine (oQ-tRNA). The polypeptide is S-adenosylmethionine:tRNA ribosyltransferase-isomerase (Francisella tularensis subsp. novicida (strain U112)).